Here is a 361-residue protein sequence, read N- to C-terminus: MKASLQGKLDKLADRFEELAGLLSDPDVISNQNQFRDLSREYAEIDPVVKCYRQYQQAVEDHGAAKAMQDDSDADMREMGAEEARDAQERMEALAAELQKLMLPKDPRDGANVFLEVRAGTGGDEAAIFAGDLFRMYSKYADQRGWKVEMVSASEGEHGGYKEVIARVIGDGVYSRMKFESGAHRVQRVPATESQGRIHTSACTVAIMAEAEDLGDIKIRTEDLRIDTYRSSGAGGQHVNTTDSAVRITHLPTGVVVECQDERSQHKNKARAMSLLSAKLYDAQQNAAHAEQAAERKSLVGSGDRSERIRTYNYPQGRVTDHRINLTLYRLNEIVEGDLDEILGALLAEYQADQLAALGEH.

Position 237 is an N5-methylglutamine (glutamine 237).

It belongs to the prokaryotic/mitochondrial release factor family. Post-translationally, methylated by PrmC. Methylation increases the termination efficiency of RF1.

The protein resides in the cytoplasm. Functionally, peptide chain release factor 1 directs the termination of translation in response to the peptide chain termination codons UAG and UAA. This is Peptide chain release factor 1 from Alcanivorax borkumensis (strain ATCC 700651 / DSM 11573 / NCIMB 13689 / SK2).